Consider the following 443-residue polypeptide: Exodeoxyribonuclease 7 large subunit (443 aa).

This sequence belongs to the XseA family. Heterooligomer composed of large and small subunits.

The protein localises to the cytoplasm. The enzyme catalyses Exonucleolytic cleavage in either 5'- to 3'- or 3'- to 5'-direction to yield nucleoside 5'-phosphates.. Bidirectionally degrades single-stranded DNA into large acid-insoluble oligonucleotides, which are then degraded further into small acid-soluble oligonucleotides. This chain is Exodeoxyribonuclease 7 large subunit, found in Vibrio parahaemolyticus serotype O3:K6 (strain RIMD 2210633).